Reading from the N-terminus, the 332-residue chain is MPNEVYDVTIIGGGPIGLFSAFYSGLRSMKTKIIDAEPAVGGKVRYFFPEKIIRDIGGIPAITGENLVANLKEQAETFHPTIVCNERVVDVTRLTDGTFQLITHNGSIHFSKTIVIATGSGTFEVNKLEALHVEDFPLAIHYDVKNIEQFRDKVVAVSGGGNSAIDWAQTLEPIAKQVHLIYRGEDFKAHEESVRELKNSRVKIHIHHEIHELFGTNNQLAEISVICNQTQATKTIETEALFINHGVKVDLGTMAEWGFEQADFGIVVDDEMKTTVPGIFACGDSATYPRKLRIIAAGLHEGPIAINSAKKYLEPTAADEAMISTHHESFIG.

FAD-binding residues include Asp-35, Lys-43, Phe-48, Val-88, Phe-123, Asp-284, and Thr-325.

It belongs to the ferredoxin--NADP reductase type 2 family. As to quaternary structure, homodimer. The cofactor is FAD.

It carries out the reaction 2 reduced [2Fe-2S]-[ferredoxin] + NADP(+) + H(+) = 2 oxidized [2Fe-2S]-[ferredoxin] + NADPH. This is Ferredoxin--NADP reductase 1 from Listeria welshimeri serovar 6b (strain ATCC 35897 / DSM 20650 / CCUG 15529 / CIP 8149 / NCTC 11857 / SLCC 5334 / V8).